Consider the following 124-residue polypeptide: ATP synthase epsilon chain (124 aa).

It belongs to the ATPase epsilon chain family. F-type ATPases have 2 components, CF(1) - the catalytic core - and CF(0) - the membrane proton channel. CF(1) has five subunits: alpha(3), beta(3), gamma(1), delta(1), epsilon(1). CF(0) has three main subunits: a, b and c.

The protein localises to the cell membrane. Its function is as follows. Produces ATP from ADP in the presence of a proton gradient across the membrane. In Streptomyces griseus subsp. griseus (strain JCM 4626 / CBS 651.72 / NBRC 13350 / KCC S-0626 / ISP 5235), this protein is ATP synthase epsilon chain.